A 308-amino-acid chain; its full sequence is Cell division protein FtsQ (308 aa).

At 1 to 53 the chain is on the cytoplasmic side; sequence MDSGGRIVYALNVEKTGFLRILSVTVLQRLYRRVFWFLFKCVAGIDVPRHAGS. The chain crosses the membrane as a helical span at residues 54–74; the sequence is LAVFSFFFLSILYSISSGGYM. The Periplasmic segment spans residues 75–308; it reads NHFMKVAISN…LLKMLKAGSV (234 aa). The POTRA domain maps to 87–155; that stretch reads FLVTHVDMSG…DRLRISLVER (69 aa).

This sequence belongs to the FtsQ/DivIB family. FtsQ subfamily.

It is found in the cell inner membrane. In terms of biological role, essential cell division protein. The chain is Cell division protein FtsQ from Bartonella bacilliformis.